Reading from the N-terminus, the 481-residue chain is Glycosyl hydrolase family 109 protein 1 (481 aa).

The segment at residues 1 to 29 (MDNSSSRRRFLQTLGLATGALAAGSFANA) is a signal peptide (tat-type signal). NAD(+) is bound by residues 84–85 (ER), aspartate 106, 155–158 (WEWH), 175–176 (EV), and asparagine 204. Substrate is bound by residues tyrosine 233, arginine 252, 264–267 (YPTH), and tyrosine 347. NAD(+) is bound at residue tyrosine 264.

Belongs to the Gfo/Idh/MocA family. Glycosyl hydrolase 109 subfamily. NAD(+) serves as cofactor. Post-translationally, predicted to be exported by the Tat system. The position of the signal peptide cleavage has not been experimentally proven.

In terms of biological role, glycosidase. The chain is Glycosyl hydrolase family 109 protein 1 from Akkermansia muciniphila (strain ATCC BAA-835 / DSM 22959 / JCM 33894 / BCRC 81048 / CCUG 64013 / CIP 107961 / Muc).